The following is an 89-amino-acid chain: Small ribosomal subunit protein uS15 (89 aa).

This sequence belongs to the universal ribosomal protein uS15 family. In terms of assembly, part of the 30S ribosomal subunit. Forms a bridge to the 50S subunit in the 70S ribosome, contacting the 23S rRNA.

Functionally, one of the primary rRNA binding proteins, it binds directly to 16S rRNA where it helps nucleate assembly of the platform of the 30S subunit by binding and bridging several RNA helices of the 16S rRNA. Forms an intersubunit bridge (bridge B4) with the 23S rRNA of the 50S subunit in the ribosome. The polypeptide is Small ribosomal subunit protein uS15 (Ralstonia nicotianae (strain ATCC BAA-1114 / GMI1000) (Ralstonia solanacearum)).